The chain runs to 524 residues: Glucose-6-phosphate isomerase (524 aa).

Glu-346 (proton donor) is an active-site residue. Active-site residues include His-377 and Lys-492.

Belongs to the GPI family.

It is found in the cytoplasm. The enzyme catalyses alpha-D-glucose 6-phosphate = beta-D-fructose 6-phosphate. It functions in the pathway carbohydrate biosynthesis; gluconeogenesis. The protein operates within carbohydrate degradation; glycolysis; D-glyceraldehyde 3-phosphate and glycerone phosphate from D-glucose: step 2/4. Its function is as follows. Catalyzes the reversible isomerization of glucose-6-phosphate to fructose-6-phosphate. This Chlamydia trachomatis serovar A (strain ATCC VR-571B / DSM 19440 / HAR-13) protein is Glucose-6-phosphate isomerase.